The chain runs to 219 residues: OVARIAN TUMOR DOMAIN-containing deubiquitinating enzyme 12 (219 aa).

Residues 79–203 form the OTU domain; sequence LCELKVSGDG…EVHYNSLYDI (125 aa). D87 is an active-site residue. C90 functions as the Nucleophile in the catalytic mechanism. H196 is a catalytic residue.

The protein belongs to the peptidase C85 family.

It carries out the reaction Thiol-dependent hydrolysis of ester, thioester, amide, peptide and isopeptide bonds formed by the C-terminal Gly of ubiquitin (a 76-residue protein attached to proteins as an intracellular targeting signal).. Hydrolase that can remove conjugated ubiquitin from proteins in vitro and may therefore play an important regulatory role at the level of protein turnover by preventing degradation. Inactive cysteine protease. This Arabidopsis thaliana (Mouse-ear cress) protein is OVARIAN TUMOR DOMAIN-containing deubiquitinating enzyme 12.